Here is a 162-residue protein sequence, read N- to C-terminus: Calcium vector protein (162 aa).

Alanine 2 is modified (N-acetylalanine). EF-hand domains are found at residues 12 to 47, 49 to 84, 86 to 121, and 123 to 158; these read EEKD…LGQT, TKRE…KWVR, DDEE…VGEE, and LTDA…SKNA. Lysine 96 is modified (N6,N6,N6-trimethyllysine). Aspartate 99, asparagine 101, aspartate 103, and glutamate 110 together coordinate Ca(2+). An N6,N6,N6-trimethyllysine modification is found at lysine 117. Ca(2+) contacts are provided by aspartate 136, aspartate 138, asparagine 140, and glutamate 147.

It localises to the cytoplasm. Its function is as follows. The exact function of this protein is not yet known. It interacts with CAVPT, a protein also of unknown function, in a calcium-dependent way. This protein binds two calcium ions. This Branchiostoma lanceolatum (Common lancelet) protein is Calcium vector protein.